A 115-amino-acid chain; its full sequence is MSTRLLCWMALCLLGAELSEAEVAQSPRYKITEKSQAVAFWCDPISGHATLYWYRQILGQGPELLVQFQDESVVDDSQLPKDRFSAERLKGVDSTLKIQPAELGDSAMYLCASSL.

The N-terminal stretch at 1–21 (MSTRLLCWMALCLLGAELSEA) is a signal peptide. The Ig-like domain maps to 22-115 (EVAQSPRYKI…SAMYLCASSL (94 aa)). An intrachain disulfide couples cysteine 42 to cysteine 111.

Alpha-beta TR is a heterodimer composed of an alpha and beta chain; disulfide-linked. The alpha-beta TR is associated with the transmembrane signaling CD3 coreceptor proteins to form the TR-CD3 (TcR or TCR). The assembly of alpha-beta TR heterodimers with CD3 occurs in the endoplasmic reticulum where a single alpha-beta TR heterodimer associates with one CD3D-CD3E heterodimer, one CD3G-CD3E heterodimer and one CD247 homodimer forming a stable octameric structure. CD3D-CD3E and CD3G-CD3E heterodimers preferentially associate with TR alpha and TR beta chains, respectively. The association of the CD247 homodimer is the last step of TcR assembly in the endoplasmic reticulum and is required for transport to the cell surface.

It is found in the cell membrane. V region of the variable domain of T cell receptor (TR) beta chain that participates in the antigen recognition. Alpha-beta T cell receptors are antigen specific receptors which are essential to the immune response and are present on the cell surface of T lymphocytes. Recognize peptide-major histocompatibility (MH) (pMH) complexes that are displayed by antigen presenting cells (APC), a prerequisite for efficient T cell adaptive immunity against pathogens. Binding of alpha-beta TR to pMH complex initiates TR-CD3 clustering on the cell surface and intracellular activation of LCK that phosphorylates the ITAM motifs of CD3G, CD3D, CD3E and CD247 enabling the recruitment of ZAP70. In turn ZAP70 phosphorylates LAT, which recruits numerous signaling molecules to form the LAT signalosome. The LAT signalosome propagates signal branching to three major signaling pathways, the calcium, the mitogen-activated protein kinase (MAPK) kinase and the nuclear factor NF-kappa-B (NF-kB) pathways, leading to the mobilization of transcription factors that are critical for gene expression and essential for T cell growth and differentiation. The T cell repertoire is generated in the thymus, by V-(D)-J rearrangement. This repertoire is then shaped by intrathymic selection events to generate a peripheral T cell pool of self-MH restricted, non-autoaggressive T cells. Post-thymic interaction of alpha-beta TR with the pMH complexes shapes TR structural and functional avidity. This is T cell receptor beta variable 11-1 from Homo sapiens (Human).